The chain runs to 256 residues: Ubiquinone/menaquinone biosynthesis C-methyltransferase UbiE (256 aa).

Residues 1 to 12 (MNDQRKGEHAEP) show a composition bias toward basic and acidic residues. The tract at residues 1–21 (MNDQRKGEHAEPTTHFGYQDV) is disordered. S-adenosyl-L-methionine is bound by residues T79, D100, and 128 to 129 (DA).

Belongs to the class I-like SAM-binding methyltransferase superfamily. MenG/UbiE family.

The catalysed reaction is a 2-demethylmenaquinol + S-adenosyl-L-methionine = a menaquinol + S-adenosyl-L-homocysteine + H(+). It catalyses the reaction a 2-methoxy-6-(all-trans-polyprenyl)benzene-1,4-diol + S-adenosyl-L-methionine = a 5-methoxy-2-methyl-3-(all-trans-polyprenyl)benzene-1,4-diol + S-adenosyl-L-homocysteine + H(+). It participates in quinol/quinone metabolism; menaquinone biosynthesis; menaquinol from 1,4-dihydroxy-2-naphthoate: step 2/2. The protein operates within cofactor biosynthesis; ubiquinone biosynthesis. In terms of biological role, methyltransferase required for the conversion of demethylmenaquinol (DMKH2) to menaquinol (MKH2) and the conversion of 2-polyprenyl-6-methoxy-1,4-benzoquinol (DDMQH2) to 2-polyprenyl-3-methyl-6-methoxy-1,4-benzoquinol (DMQH2). The polypeptide is Ubiquinone/menaquinone biosynthesis C-methyltransferase UbiE (Pseudomonas putida (strain W619)).